Reading from the N-terminus, the 349-residue chain is Protein FAM98C (349 aa).

The segment at 313–349 is disordered; it reads PDRGGRPNELEPPMPTWRSRREDGGPQCWGRKKKKKK.

The protein belongs to the FAM98 family.

The sequence is that of Protein FAM98C (FAM98C) from Homo sapiens (Human).